Consider the following 189-residue polypeptide: Flavin prenyltransferase UbiX (189 aa).

FMN is bound by residues 10 to 12, serine 37, 88 to 91, and arginine 123; these read GAS and SIKT. The dimethylallyl phosphate site is built by tyrosine 153 and arginine 169.

This sequence belongs to the UbiX/PAD1 family.

It catalyses the reaction dimethylallyl phosphate + FMNH2 = prenylated FMNH2 + phosphate. Its pathway is cofactor biosynthesis; ubiquinone biosynthesis. In terms of biological role, flavin prenyltransferase that catalyzes the synthesis of the prenylated FMN cofactor (prenyl-FMN) for 4-hydroxy-3-polyprenylbenzoic acid decarboxylase UbiD. The prenyltransferase is metal-independent and links a dimethylallyl moiety from dimethylallyl monophosphate (DMAP) to the flavin N5 and C6 atoms of FMN. The sequence is that of Flavin prenyltransferase UbiX from Salmonella typhi.